Here is a 143-residue protein sequence, read N- to C-terminus: Large ribosomal subunit protein uL13c (143 aa).

This sequence belongs to the universal ribosomal protein uL13 family. In terms of assembly, part of the 50S ribosomal subunit.

It localises to the plastid. It is found in the chloroplast. The sequence is that of Large ribosomal subunit protein uL13c from Guillardia theta (Cryptophyte).